Reading from the N-terminus, the 586-residue chain is Aspartate--tRNA(Asp/Asn) ligase (586 aa).

An L-aspartate-binding site is contributed by glutamate 172. An aspartate region spans residues 196–199 (QLYK). Arginine 218 contacts L-aspartate. Residues 218-220 (RDE) and glutamine 227 contribute to the ATP site. Histidine 446 contributes to the L-aspartate binding site. Glutamate 480 provides a ligand contact to ATP. Arginine 487 contacts L-aspartate. 532 to 535 (GIDR) is a binding site for ATP.

This sequence belongs to the class-II aminoacyl-tRNA synthetase family. Type 1 subfamily. As to quaternary structure, homodimer.

The protein resides in the cytoplasm. It carries out the reaction tRNA(Asx) + L-aspartate + ATP = L-aspartyl-tRNA(Asx) + AMP + diphosphate. Aspartyl-tRNA synthetase with relaxed tRNA specificity since it is able to aspartylate not only its cognate tRNA(Asp) but also tRNA(Asn). Reaction proceeds in two steps: L-aspartate is first activated by ATP to form Asp-AMP and then transferred to the acceptor end of tRNA(Asp/Asn). This chain is Aspartate--tRNA(Asp/Asn) ligase, found in Borreliella afzelii (strain PKo) (Borrelia afzelii).